Reading from the N-terminus, the 342-residue chain is Leucine-rich repeat-containing protein 23 (342 aa).

Acidic residues predominate over residues 1 to 30 (MSDEDDLEDFETDQDDLEREDDEKETEEWE). Residues 1–42 (MSDEDDLEDFETDQDDLEREDDEKETEEWEDYRKEGEESEDW) are disordered. Residues 3 to 27 (DEDDLEDFETDQDDLEREDDEKETE) adopt a coiled-coil conformation. 8 LRR repeats span residues 91–112 (HLRYVDVSENHLTDLSPLNHLT), 113–133 (NLLWLKADGNQLRSARLNELP), 134–154 (YLQIASFAYNQITDTEGISHP), 155–176 (RLASLDLKGNRIHMVTGLDPQK), 179–199 (SLHTLELRGNQLNSTLGINLP), 200–221 (KLKNLFLAQNMLKKVEGLENLS), 222–243 (NLTTLHLRDNQIETLSGFSKEM), and 245–266 (SLQYLNLRGNMVADLGELAKLR). The segment at 207-342 (AQNMLKKVEG…PESELDQSST (136 aa)) is interaction with RSPH9. Residues 279 to 317 (NPCTDENDYRQEALVQIAHLERLDKEFYEEEERAEADEI) enclose the LRRCT domain. The stretch at 306–332 (YEEEERAEADEIRQRMKEEQEQEAEVE) forms a coiled coil. The disordered stretch occupies residues 307 to 342 (EEEERAEADEIRQRMKEEQEQEAEVEPESELDQSST). The segment covering 314-324 (ADEIRQRMKEE) has biased composition (basic and acidic residues). The segment covering 325–342 (QEQEAEVEPESELDQSST) has biased composition (acidic residues).

In terms of assembly, component of the axonemal radial spoke complex. Interacts with RSPH3. Interacts with RSPH9.

It is found in the cytoplasm. The protein resides in the cytoskeleton. The protein localises to the flagellum axoneme. Its function is as follows. Essential for sperm motility and male fertility. Plays an important role in the proper assembly of the third radial spoke (RS3) head and the bridge structure between RS2 and RS3 in the sperm flagella. The polypeptide is Leucine-rich repeat-containing protein 23 (LRRC23) (Bos taurus (Bovine)).